A 943-amino-acid polypeptide reads, in one-letter code: Valine--tRNA ligase (943 aa).

The 'HIGH' region motif lies at 45 to 55 (PNVTGTLHMGH). The 'KMSKS' region motif lies at 541–545 (KMSKS). K544 provides a ligand contact to ATP. Positions 875-934 (IDVAAERIRLAKEIEKLEKQISIAQGKLANEGFVARAPAAVIDQEKQRVADFTATLEQLK) form a coiled coil.

This sequence belongs to the class-I aminoacyl-tRNA synthetase family. ValS type 1 subfamily. Monomer.

The protein resides in the cytoplasm. The catalysed reaction is tRNA(Val) + L-valine + ATP = L-valyl-tRNA(Val) + AMP + diphosphate. Catalyzes the attachment of valine to tRNA(Val). As ValRS can inadvertently accommodate and process structurally similar amino acids such as threonine, to avoid such errors, it has a 'posttransfer' editing activity that hydrolyzes mischarged Thr-tRNA(Val) in a tRNA-dependent manner. The sequence is that of Valine--tRNA ligase from Dechloromonas aromatica (strain RCB).